Consider the following 577-residue polypeptide: CTP synthase (577 aa).

Positions 1-268 (MDPAFIFITG…GALLCERLRL (268 aa)) are amidoligase domain. S14 is a binding site for CTP. S14 is a binding site for UTP. 15-20 (SLGKGI) is an ATP binding site. Y55 serves as a coordination point for L-glutamine. D72 is an ATP binding site. Mg(2+) is bound by residues D72 and E142. CTP is bound by residues 149 to 151 (DIE), 189 to 194 (KTKPLQ), and K225. Residues 189–194 (KTKPLQ) and K225 contribute to the UTP site. The region spanning 333 to 575 (TVALVGKYVS…VAAGLERKDS (243 aa)) is the Glutamine amidotransferase type-1 domain. L-glutamine is bound at residue G396. Catalysis depends on C423, which acts as the Nucleophile; for glutamine hydrolysis. Residues 424–427 (LGMQ), E447, and R503 each bind L-glutamine. Residues H548 and E550 contribute to the active site.

This sequence belongs to the CTP synthase family. Homotetramer.

The enzyme catalyses UTP + L-glutamine + ATP + H2O = CTP + L-glutamate + ADP + phosphate + 2 H(+). The catalysed reaction is L-glutamine + H2O = L-glutamate + NH4(+). It catalyses the reaction UTP + NH4(+) + ATP = CTP + ADP + phosphate + 2 H(+). Its pathway is pyrimidine metabolism; CTP biosynthesis via de novo pathway; CTP from UDP: step 2/2. With respect to regulation, allosterically activated by GTP, when glutamine is the substrate; GTP has no effect on the reaction when ammonia is the substrate. The allosteric effector GTP functions by stabilizing the protein conformation that binds the tetrahedral intermediate(s) formed during glutamine hydrolysis. Inhibited by the product CTP, via allosteric rather than competitive inhibition. In terms of biological role, catalyzes the ATP-dependent amination of UTP to CTP with either L-glutamine or ammonia as the source of nitrogen. Regulates intracellular CTP levels through interactions with the four ribonucleotide triphosphates. In Treponema pallidum (strain Nichols), this protein is CTP synthase.